The sequence spans 502 residues: MRGLCEFYWQEFGIKGFSVAQKPFGATYVWSSIINTLQTQVEVKKRRHRLKRHNDCFVGSEAVDVIFSHLIQNKYFGDVDIPRAKVVRVCQALMDYKVFEAIPTKVFGKDKKPTFEDSSCSLYRFTTIPNQDSQLGKENKLCSPSRYADALFKSSDIKSASLEDLWENLSLKPANSPHVNISATLSPQVINEVWQEETIGRLLQLVDLPLLDSLLKQQEAVPKVPQSKRQSDMVNSSNYLDRGILKAYSDSQEDEWLSAAIDCLEYLPDQMVVEISRSFPEQPDRTDLVKELLFDAIGRYYSSREPLLNHLSDVHNGIAELLVNGKTEIALEATQLLLKLLDFQNREEFRRLLYFMAVAANPSEFKLQKESDNRMVVKRIFSKAIVDNKNLSKGKTDLLVLFLMDHQKDVFKIPGTLHKIVSVKLMAIQNGRDPNRDAGYIYCQRIDQRDYSNNTQKTTKDELLNLLKTIDEDSKLSAKEKKKLLGQFYKCHPDIFIEHFGD.

One can recognise a DEP domain in the interval 37–127 (LQTQVEVKKR…SSCSLYRFTT (91 aa)).

Belongs to the DEPDC7 family.

The sequence is that of DEP domain-containing protein 7 (DEPDC7) from Macaca fascicularis (Crab-eating macaque).